A 140-amino-acid chain; its full sequence is Nucleoside diphosphate kinase (140 aa).

ATP contacts are provided by K11, F59, R87, T93, R104, and N114. H117 functions as the Pros-phosphohistidine intermediate in the catalytic mechanism.

It belongs to the NDK family. As to quaternary structure, homotetramer. Mg(2+) serves as cofactor.

Its subcellular location is the cytoplasm. It carries out the reaction a 2'-deoxyribonucleoside 5'-diphosphate + ATP = a 2'-deoxyribonucleoside 5'-triphosphate + ADP. It catalyses the reaction a ribonucleoside 5'-diphosphate + ATP = a ribonucleoside 5'-triphosphate + ADP. In terms of biological role, major role in the synthesis of nucleoside triphosphates other than ATP. The ATP gamma phosphate is transferred to the NDP beta phosphate via a ping-pong mechanism, using a phosphorylated active-site intermediate. The protein is Nucleoside diphosphate kinase of Maricaulis maris (strain MCS10) (Caulobacter maris).